Here is a 329-residue protein sequence, read N- to C-terminus: Phosphate acyltransferase (329 aa).

This sequence belongs to the PlsX family. Homodimer. Probably interacts with PlsY.

It is found in the cytoplasm. It carries out the reaction a fatty acyl-[ACP] + phosphate = an acyl phosphate + holo-[ACP]. It functions in the pathway lipid metabolism; phospholipid metabolism. Catalyzes the reversible formation of acyl-phosphate (acyl-PO(4)) from acyl-[acyl-carrier-protein] (acyl-ACP). This enzyme utilizes acyl-ACP as fatty acyl donor, but not acyl-CoA. This is Phosphate acyltransferase from Campylobacter fetus subsp. fetus (strain 82-40).